A 215-amino-acid polypeptide reads, in one-letter code: Adenylate kinase (215 aa).

10–15 provides a ligand contact to ATP; the sequence is GAGKGT. Residues 30 to 59 form an NMP region; that stretch reads STGDMLRAAVKAGSPLGLKVKGVMDSGGLV. AMP-binding positions include Thr-31, Arg-36, 57–59, 85–88, and Gln-92; these read GLV and GFPR. An LID region spans residues 122–159; the sequence is GRRVHAASGRVYHDLHNPPKVAGKDDETGEDLIQREDD. ATP-binding positions include Arg-123 and 132–133; that span reads VY. AMP contacts are provided by Arg-156 and Arg-167. Gly-201 serves as a coordination point for ATP.

This sequence belongs to the adenylate kinase family. Monomer.

Its subcellular location is the cytoplasm. It catalyses the reaction AMP + ATP = 2 ADP. The protein operates within purine metabolism; AMP biosynthesis via salvage pathway; AMP from ADP: step 1/1. In terms of biological role, catalyzes the reversible transfer of the terminal phosphate group between ATP and AMP. Plays an important role in cellular energy homeostasis and in adenine nucleotide metabolism. The polypeptide is Adenylate kinase (Azotobacter vinelandii (strain DJ / ATCC BAA-1303)).